A 281-amino-acid polypeptide reads, in one-letter code: UPF0046 protein C25E10.12 (281 aa).

Belongs to the UPF0046 family.

This Caenorhabditis elegans protein is UPF0046 protein C25E10.12.